The primary structure comprises 768 residues: Degenerin mec-4 (768 aa).

At 1–109 the chain is on the cytoplasmic side; that stretch reads MSWMQNLKNY…GEAPNVYYRA (109 aa). A helical transmembrane segment spans residues 110 to 130; the sequence is VWVMLFLGCMIMLYLNAQSVL. The Extracellular segment spans residues 131-718; the sequence is DKYNRNEKIV…VNLLADFGGQ (588 aa). Disordered stretches follow at residues 187–221 and 237–260; these read AGGNKEHDGEKEVITEAPTTPAPTTKPSRRRGKRD and GSQGSSEQEDKDDEKEEEMHETTT. The segment covering 189-200 has biased composition (basic and acidic residues); sequence GNKEHDGEKEVI. A compositionally biased stretch (low complexity) spans 203 to 212; that stretch reads APTTPAPTTK. Over residues 243 to 252 the composition is skewed to acidic residues; sequence EQEDKDDEKE. N-linked (GlcNAc...) asparagine glycans are attached at residues asparagine 336, asparagine 357, asparagine 480, asparagine 484, asparagine 503, and asparagine 671. The chain crosses the membrane as a helical span at residues 719–739; the sequence is LGLWCGISFLTCCEFVFLFLE. At 740-768 the chain is on the cytoplasmic side; that stretch reads TAYMSAEHNYSLYKKKKAEKAKKVASGSF.

The protein belongs to the amiloride-sensitive sodium channel (TC 1.A.6) family. The channel is probably composed of at least the mec-2, mec-4, mec-6 and mec-10 subunits.

The protein localises to the membrane. Probable sodium channel subunit. May be needed for mechanosensory transduction (touch sensitivity). Negatively regulates the turning step of male mating behavior. This is Degenerin mec-4 (mec-4) from Caenorhabditis briggsae.